Reading from the N-terminus, the 92-residue chain is Conotoxin Im9.4 (92 aa).

The signal sequence occupies residues 1–20; sequence MHRSLAGSAVLMLLLLFALG. A propeptide spanning residues 21–62 is cleaved from the precursor; sequence NFVGVQPGLVTRDADNGQLMDNRRNLRLERKTMSLFKSLDKR. 3 cysteine pairs are disulfide-bonded: cysteine 65–cysteine 79, cysteine 69–cysteine 81, and cysteine 75–cysteine 87. Residue asparagine 90 is modified to Asparagine amide.

It belongs to the conotoxin P superfamily. Expressed by the venom duct.

The protein resides in the secreted. In terms of biological role, probable neurotoxin that inhibits ion channels. This Conus imperialis (Imperial cone) protein is Conotoxin Im9.4.